Here is a 255-residue protein sequence, read N- to C-terminus: Flagellar L-ring protein (255 aa).

An N-terminal signal peptide occupies residues 1–25 (MRRHSTRKTVARVAVVALAVGVLAG). Residue cysteine 26 is the site of N-palmitoyl cysteine attachment. Cysteine 26 carries the S-diacylglycerol cysteine lipid modification.

This sequence belongs to the FlgH family. As to quaternary structure, the basal body constitutes a major portion of the flagellar organelle and consists of four rings (L,P,S, and M) mounted on a central rod.

The protein resides in the cell outer membrane. The protein localises to the bacterial flagellum basal body. Assembles around the rod to form the L-ring and probably protects the motor/basal body from shearing forces during rotation. This is Flagellar L-ring protein from Rhodospirillum rubrum (strain ATCC 11170 / ATH 1.1.1 / DSM 467 / LMG 4362 / NCIMB 8255 / S1).